We begin with the raw amino-acid sequence, 184 residues long: Endothelial cell-specific molecule 1 (184 aa).

The first 21 residues, 1–21, serve as a signal peptide directing secretion; the sequence is MKSLLLLTTLLIPLHLGMAWS. One can recognise an IGFBP N-terminal domain in the interval 24 to 102; it reads YAVDCPEHCD…GDEFGVCKDC (79 aa). Cystine bridges form between Cys-28/Cys-51, Cys-32/Cys-53, Cys-37/Cys-54, Cys-43/Cys-57, Cys-65/Cys-83, and Cys-77/Cys-99. Positions 145 to 184 are disordered; sequence RTSASQTERDAASGDGNAVREEIGDRNAARPSVMKWLNPR. The segment covering 151 to 172 has biased composition (basic and acidic residues); that stretch reads TERDAASGDGNAVREEIGDRNA. Residue Ser-157 is glycosylated (O-linked (Xyl...) (chondroitin sulfate) serine).

O-glycosylated; contains chondroitin sulfate and dermatan sulfate. In terms of tissue distribution, pineal gland specific.

The protein localises to the secreted. Its function is as follows. Involved in angiogenesis; promotes angiogenic sprouting. May have potent implications in lung endothelial cell-leukocyte interactions. This is Endothelial cell-specific molecule 1 (Esm1) from Rattus norvegicus (Rat).